A 396-amino-acid polypeptide reads, in one-letter code: Tryptophan synthase beta chain (396 aa).

Position 86 is an N6-(pyridoxal phosphate)lysine (Lys-86).

This sequence belongs to the TrpB family. In terms of assembly, tetramer of two alpha and two beta chains. Pyridoxal 5'-phosphate is required as a cofactor.

It carries out the reaction (1S,2R)-1-C-(indol-3-yl)glycerol 3-phosphate + L-serine = D-glyceraldehyde 3-phosphate + L-tryptophan + H2O. It functions in the pathway amino-acid biosynthesis; L-tryptophan biosynthesis; L-tryptophan from chorismate: step 5/5. In terms of biological role, the beta subunit is responsible for the synthesis of L-tryptophan from indole and L-serine. The chain is Tryptophan synthase beta chain from Pectobacterium atrosepticum (strain SCRI 1043 / ATCC BAA-672) (Erwinia carotovora subsp. atroseptica).